Consider the following 201-residue polypeptide: Holliday junction branch migration complex subunit RuvA (201 aa).

Positions 1–64 (MYAYIRGKLT…EDAQLLYGFI (64 aa)) are domain I. The tract at residues 65-143 (NEEEKDMFLS…ITRETTETLL (79 aa)) is domain II. The segment at 144-150 (SMNEENS) is flexible linker. The segment at 151 to 201 (NSENLVKEALLALEALGYSKREISKVEKVLNKSTFDSVDEAVKLGLKTLVS) is domain III.

The protein belongs to the RuvA family. Homotetramer. Forms an RuvA(8)-RuvB(12)-Holliday junction (HJ) complex. HJ DNA is sandwiched between 2 RuvA tetramers; dsDNA enters through RuvA and exits via RuvB. An RuvB hexamer assembles on each DNA strand where it exits the tetramer. Each RuvB hexamer is contacted by two RuvA subunits (via domain III) on 2 adjacent RuvB subunits; this complex drives branch migration. In the full resolvosome a probable DNA-RuvA(4)-RuvB(12)-RuvC(2) complex forms which resolves the HJ.

The protein localises to the cytoplasm. Functionally, the RuvA-RuvB-RuvC complex processes Holliday junction (HJ) DNA during genetic recombination and DNA repair, while the RuvA-RuvB complex plays an important role in the rescue of blocked DNA replication forks via replication fork reversal (RFR). RuvA specifically binds to HJ cruciform DNA, conferring on it an open structure. The RuvB hexamer acts as an ATP-dependent pump, pulling dsDNA into and through the RuvAB complex. HJ branch migration allows RuvC to scan DNA until it finds its consensus sequence, where it cleaves and resolves the cruciform DNA. The protein is Holliday junction branch migration complex subunit RuvA of Staphylococcus haemolyticus (strain JCSC1435).